Consider the following 160-residue polypeptide: Lipoprotein signal peptidase (160 aa).

2 helical membrane passes run 63 to 83 (YRLP…AVTF) and 89 to 109 (DQHL…GNLI). Catalysis depends on residues Asp-119 and Asp-137. A helical transmembrane segment spans residues 132–152 (AFNVADSAICVGVALLAVDMI).

The protein belongs to the peptidase A8 family.

Its subcellular location is the cell inner membrane. The catalysed reaction is Release of signal peptides from bacterial membrane prolipoproteins. Hydrolyzes -Xaa-Yaa-Zaa-|-(S,diacylglyceryl)Cys-, in which Xaa is hydrophobic (preferably Leu), and Yaa (Ala or Ser) and Zaa (Gly or Ala) have small, neutral side chains.. It participates in protein modification; lipoprotein biosynthesis (signal peptide cleavage). Its function is as follows. This protein specifically catalyzes the removal of signal peptides from prolipoproteins. This is Lipoprotein signal peptidase from Geobacter sulfurreducens (strain ATCC 51573 / DSM 12127 / PCA).